The sequence spans 191 residues: dCTP deaminase, dUMP-forming (191 aa).

Residues K101–R106, D119, T127–E129, Q148, Y162, and Q174 each bind dCTP. E129 serves as the catalytic Proton donor/acceptor. The interval S169–V191 is disordered. A compositionally biased stretch (polar residues) spans Y171–V191.

This sequence belongs to the dCTP deaminase family. Homotrimer.

The enzyme catalyses dCTP + 2 H2O = dUMP + NH4(+) + diphosphate. It participates in pyrimidine metabolism; dUMP biosynthesis; dUMP from dCTP: step 1/1. In terms of biological role, bifunctional enzyme that catalyzes both the deamination of dCTP to dUTP and the hydrolysis of dUTP to dUMP without releasing the toxic dUTP intermediate. This Streptomyces griseus subsp. griseus (strain JCM 4626 / CBS 651.72 / NBRC 13350 / KCC S-0626 / ISP 5235) protein is dCTP deaminase, dUMP-forming.